The sequence spans 368 residues: Homoserine O-acetyltransferase (368 aa).

The AB hydrolase-1 domain occupies 43 to 354 (NVVVVCHALT…DYGHDAFLVE (312 aa)). Residue S148 is the Nucleophile of the active site. R220 lines the substrate pocket. Active-site residues include D314 and H348. D349 lines the substrate pocket.

The protein belongs to the AB hydrolase superfamily. MetX family. In terms of assembly, homodimer.

Its subcellular location is the cytoplasm. It carries out the reaction L-homoserine + acetyl-CoA = O-acetyl-L-homoserine + CoA. The protein operates within amino-acid biosynthesis; L-methionine biosynthesis via de novo pathway; O-acetyl-L-homoserine from L-homoserine: step 1/1. Its function is as follows. Transfers an acetyl group from acetyl-CoA to L-homoserine, forming acetyl-L-homoserine. This chain is Homoserine O-acetyltransferase, found in Sulfurimonas autotrophica (strain ATCC BAA-671 / DSM 16294 / JCM 11897 / OK10).